The chain runs to 392 residues: Elongation factor Tu-3 (392 aa).

Residues 10 to 206 (KPHLNIGTMG…AVDTYVPMPE (197 aa)) enclose the tr-type G domain. Residues 19–26 (GHVDHGKT) form a G1 region. 19 to 26 (GHVDHGKT) is a GTP binding site. Residue T26 coordinates Mg(2+). The tract at residues 63 to 67 (GITIN) is G2. A G3 region spans residues 84 to 87 (DMPG). GTP contacts are provided by residues 84–88 (DMPGH) and 139–142 (NKAD). The tract at residues 139 to 142 (NKAD) is G4. The tract at residues 176–178 (SGL) is G5.

It belongs to the TRAFAC class translation factor GTPase superfamily. Classic translation factor GTPase family. EF-Tu/EF-1A subfamily. As to quaternary structure, monomer.

Its subcellular location is the cytoplasm. It catalyses the reaction GTP + H2O = GDP + phosphate + H(+). Functionally, GTP hydrolase that promotes the GTP-dependent binding of aminoacyl-tRNA to the A-site of ribosomes during protein biosynthesis. In Streptomyces coelicolor (strain ATCC BAA-471 / A3(2) / M145), this protein is Elongation factor Tu-3.